The primary structure comprises 111 residues: Nucleoid-associated protein CYA_1369 (111 aa).

Belongs to the YbaB/EbfC family. Homodimer.

It localises to the cytoplasm. The protein localises to the nucleoid. In terms of biological role, binds to DNA and alters its conformation. May be involved in regulation of gene expression, nucleoid organization and DNA protection. This Synechococcus sp. (strain JA-3-3Ab) (Cyanobacteria bacterium Yellowstone A-Prime) protein is Nucleoid-associated protein CYA_1369.